The sequence spans 200 residues: MAKVLVLYYSSYGHVETMAQHVAEGAKSVPGVEVTLKRVPETIPADQAKAIGVKVDQAAPVATVDELPNYDAIIFGTPTRFGNMAGQMRTFLDQTGCLWMKGALVGKIGSVFASTGTQHGGQETTITSFHTTLLHQGMVIVGVPYACSGLVNMSEITGGTPYGATTLAGADGSRQPSANELDIARYQGKHVAELAVKLAS.

Positions 4 to 191 (VLVLYYSSYG…DIARYQGKHV (188 aa)) constitute a Flavodoxin-like domain. FMN contacts are provided by residues 10–15 (SSYGHV) and 79–81 (TRF). Tyr-12 serves as a coordination point for NAD(+). Substrate is bound at residue Trp-99. Residues 114 to 120 (STGTQHG) and His-135 each bind FMN.

It belongs to the WrbA family. FMN serves as cofactor.

The catalysed reaction is a quinone + NADH + H(+) = a quinol + NAD(+). The enzyme catalyses a quinone + NADPH + H(+) = a quinol + NADP(+). This Burkholderia ambifaria (strain MC40-6) protein is NAD(P)H dehydrogenase (quinone).